Reading from the N-terminus, the 460-residue chain is Protein btn1 (460 aa).

Transmembrane regions (helical) follow at residues 42 to 62 (VCVA…VILS), 76 to 96 (VVLL…PYFI), 105 to 125 (IIIF…SPPY), 135 to 155 (LAGI…FVGL), 164 to 184 (LAAW…AYAL), 195 to 215 (ATLL…FMVL), 287 to 307 (GLFF…YTIN), 323 to 343 (FAHF…GVFI), 356 to 376 (LYLP…QAVF), 378 to 398 (FIPS…LGGL), and 428 to 448 (AAGI…LCDW).

The protein belongs to the battenin family.

It localises to the vacuole membrane. Its function is as follows. Involved in vacuolar transport and vacuole pH homeostasis. Also required for cytokinesis. The sequence is that of Protein btn1 (btn1) from Aspergillus fumigatus (strain ATCC MYA-4609 / CBS 101355 / FGSC A1100 / Af293) (Neosartorya fumigata).